Consider the following 97-residue polypeptide: Co-chaperonin GroES (97 aa).

It belongs to the GroES chaperonin family. In terms of assembly, heptamer of 7 subunits arranged in a ring. Interacts with the chaperonin GroEL.

Its subcellular location is the cytoplasm. Its function is as follows. Together with the chaperonin GroEL, plays an essential role in assisting protein folding. The GroEL-GroES system forms a nano-cage that allows encapsulation of the non-native substrate proteins and provides a physical environment optimized to promote and accelerate protein folding. GroES binds to the apical surface of the GroEL ring, thereby capping the opening of the GroEL channel. The protein is Co-chaperonin GroES of Burkholderia vietnamiensis.